The sequence spans 508 residues: Maturase K (508 aa).

The protein belongs to the intron maturase 2 family. MatK subfamily.

Its subcellular location is the plastid. It is found in the chloroplast. Usually encoded in the trnK tRNA gene intron. Probably assists in splicing its own and other chloroplast group II introns. This Pelargonium hortorum (Common geranium) protein is Maturase K.